The sequence spans 281 residues: uncharacterized protein (281 aa).

The protein resides in the plastid. Its subcellular location is the chloroplast. This is an uncharacterized protein from Euglena gracilis.